The sequence spans 610 residues: Membrane protein insertase YidC (610 aa).

The helical transmembrane segment at 7 to 27 (FFITIALSILILALWQVFYLG) threads the bilayer. The tract at residues 36–82 (QARIEEQQRQAQQAAQNRQASSSTGDTPQMPANPDSIPGQGDTKAAG) is disordered. Residues 44–55 (RQAQQAAQNRQA) show a composition bias toward low complexity. 5 helical membrane-spanning segments follow: residues 358–378 (FDLLIDWGWFYFITKPMFYLI), 387–407 (NFGVAILVVTVLLKALFFPLA), 458–478 (WPVLVQIPVFFALYKVLYVTI), 510–530 (TVPHFLMIGVWPIIMGITMFL), and 546–566 (IFTWMPIIFTFMLASFPAGLV).

It belongs to the OXA1/ALB3/YidC family. Type 1 subfamily. Interacts with the Sec translocase complex via SecD. Specifically interacts with transmembrane segments of nascent integral membrane proteins during membrane integration.

Its subcellular location is the cell inner membrane. In terms of biological role, required for the insertion and/or proper folding and/or complex formation of integral membrane proteins into the membrane. Involved in integration of membrane proteins that insert both dependently and independently of the Sec translocase complex, as well as at least some lipoproteins. Aids folding of multispanning membrane proteins. The chain is Membrane protein insertase YidC from Brucella suis biovar 1 (strain 1330).